Here is a 333-residue protein sequence, read N- to C-terminus: Phosphoribosylformylglycinamidine cyclo-ligase (333 aa).

It belongs to the AIR synthase family.

It is found in the cytoplasm. It catalyses the reaction 2-formamido-N(1)-(5-O-phospho-beta-D-ribosyl)acetamidine + ATP = 5-amino-1-(5-phospho-beta-D-ribosyl)imidazole + ADP + phosphate + H(+). The protein operates within purine metabolism; IMP biosynthesis via de novo pathway; 5-amino-1-(5-phospho-D-ribosyl)imidazole from N(2)-formyl-N(1)-(5-phospho-D-ribosyl)glycinamide: step 2/2. The sequence is that of Phosphoribosylformylglycinamidine cyclo-ligase from Clostridium perfringens (strain ATCC 13124 / DSM 756 / JCM 1290 / NCIMB 6125 / NCTC 8237 / Type A).